Here is a 272-residue protein sequence, read N- to C-terminus: Ribonuclease 3 (272 aa).

Positions 1 to 20 (MTDDVTNVEQPSTASEQQPQ) are enriched in polar residues. Residues 1 to 38 (MTDDVTNVEQPSTASEQQPQDVPAAEPSAAKKRRANKA) form a disordered region. An RNase III domain is found at 44–171 (AAAIEQRLGH…VIGAIYLDGG (128 aa)). Glu84 lines the Mg(2+) pocket. Asp88 is a catalytic residue. Asp157 and Glu160 together coordinate Mg(2+). Glu160 is an active-site residue. The DRBM domain occupies 196-265 (DPKTVLQEWA…ASAMLAREGV (70 aa)).

The protein belongs to the ribonuclease III family. In terms of assembly, homodimer. Mg(2+) serves as cofactor.

Its subcellular location is the cytoplasm. The catalysed reaction is Endonucleolytic cleavage to 5'-phosphomonoester.. Its function is as follows. Digests double-stranded RNA. Involved in the processing of primary rRNA transcript to yield the immediate precursors to the large and small rRNAs (23S and 16S). Processes some mRNAs, and tRNAs when they are encoded in the rRNA operon. Processes pre-crRNA and tracrRNA of type II CRISPR loci if present in the organism. This chain is Ribonuclease 3, found in Rhodopseudomonas palustris (strain ATCC BAA-98 / CGA009).